A 64-amino-acid polypeptide reads, in one-letter code: Large ribosomal subunit protein bL28 (64 aa).

The tract at residues 1 to 21 (MAKKDQLTLRGPLYGNNRSHS) is disordered.

The protein belongs to the bacterial ribosomal protein bL28 family.

The polypeptide is Large ribosomal subunit protein bL28 (Mycoplasma genitalium (strain ATCC 33530 / DSM 19775 / NCTC 10195 / G37) (Mycoplasmoides genitalium)).